Reading from the N-terminus, the 352-residue chain is tRNA (guanine-N(1)-)-methyltransferase (352 aa).

S-adenosyl-L-methionine contacts are provided by residues Gly109 and 129-134 (IGDYVL).

The protein belongs to the RNA methyltransferase TrmD family. Homodimer.

The protein localises to the cytoplasm. It catalyses the reaction guanosine(37) in tRNA + S-adenosyl-L-methionine = N(1)-methylguanosine(37) in tRNA + S-adenosyl-L-homocysteine + H(+). Functionally, specifically methylates guanosine-37 in various tRNAs. The sequence is that of tRNA (guanine-N(1)-)-methyltransferase from Chlamydia trachomatis serovar L2 (strain ATCC VR-902B / DSM 19102 / 434/Bu).